The primary structure comprises 338 residues: Glycerol-3-phosphate dehydrogenase [NAD(P)+] (338 aa).

NADPH-binding residues include Ser-14, Tyr-15, His-35, and Lys-109. Sn-glycerol 3-phosphate is bound by residues Lys-109, Gly-138, and Thr-140. Residue Ala-142 coordinates NADPH. Sn-glycerol 3-phosphate is bound by residues Lys-194, Asp-247, Ser-257, Arg-258, and Asn-259. Residue Lys-194 is the Proton acceptor of the active site. Arg-258 is an NADPH binding site. NADPH contacts are provided by Val-282 and Glu-284.

It belongs to the NAD-dependent glycerol-3-phosphate dehydrogenase family.

The protein localises to the cytoplasm. It carries out the reaction sn-glycerol 3-phosphate + NAD(+) = dihydroxyacetone phosphate + NADH + H(+). It catalyses the reaction sn-glycerol 3-phosphate + NADP(+) = dihydroxyacetone phosphate + NADPH + H(+). It functions in the pathway membrane lipid metabolism; glycerophospholipid metabolism. Functionally, catalyzes the reduction of the glycolytic intermediate dihydroxyacetone phosphate (DHAP) to sn-glycerol 3-phosphate (G3P), the key precursor for phospholipid synthesis. The sequence is that of Glycerol-3-phosphate dehydrogenase [NAD(P)+] from Shewanella baltica (strain OS155 / ATCC BAA-1091).